We begin with the raw amino-acid sequence, 501 residues long: Alpha-internexin (501 aa).

The interval 1 to 87 is head; sequence MSFGSEHYLC…SQAAARTNEY (87 aa). Residue S72 is modified to Phosphoserine. The tract at residues 88–129 is coil 1A; the sequence is KIIRTNEKEQLQGLNDRFAVFIEKVHQLETQNRALEAELAAL. An IF rod domain is found at 94–407; that stretch reads EKEQLQGLND…KLLEGEETRF (314 aa). Residues 130-142 form a linker 1 region; the sequence is RQRHAEPSRVGEL. The tract at residues 143–238 is coil 1B; the sequence is FQRELRELRA…QVHDEEVAEL (96 aa). Phosphoserine is present on S219. The linker 2 stretch occupies residues 239–262; the sequence is LATLQASSQAAAEVDVAVAKPDLT. Residues 263-408 are coil 2; the sequence is SALREIRAQY…LLEGEETRFS (146 aa). K290 carries the post-translational modification N6-acetyllysine. Phosphoserine is present on residues S335 and S498. The tract at residues 409-501 is tail; it reads TGGLSISGLN…EESTSSSQKM (93 aa). The tract at residues 441-501 is disordered; the sequence is SAGLSLKKEE…EESTSSSQKM (61 aa). The segment covering 488–501 has biased composition (polar residues); sequence KSATEESTSSSQKM.

This sequence belongs to the intermediate filament family. As to quaternary structure, forms homodimers (in vitro). Forms heterodimers with NEFL, NEFM or NEFH (in vitro). O-glycosylated.

Functionally, class-IV neuronal intermediate filament that is able to self-assemble. It is involved in the morphogenesis of neurons. It may form an independent structural network without the involvement of other neurofilaments or it may cooperate with NEFL to form the filamentous backbone to which NEFM and NEFH attach to form the cross-bridges. May also cooperate with the neuronal intermediate filament protein PRPH to form filamentous networks. This Mus musculus (Mouse) protein is Alpha-internexin (Ina).